A 156-amino-acid chain; its full sequence is Small ribosomal subunit protein uS7 (156 aa).

It belongs to the universal ribosomal protein uS7 family. In terms of assembly, part of the 30S ribosomal subunit. Contacts proteins S9 and S11.

Functionally, one of the primary rRNA binding proteins, it binds directly to 16S rRNA where it nucleates assembly of the head domain of the 30S subunit. Is located at the subunit interface close to the decoding center, probably blocks exit of the E-site tRNA. The sequence is that of Small ribosomal subunit protein uS7 from Marinobacter nauticus (strain ATCC 700491 / DSM 11845 / VT8) (Marinobacter aquaeolei).